The sequence spans 103 residues: G0/G1 switch protein 2 (103 aa).

In terms of assembly, directly interacts with BCL2; this interaction prevents the formation of the anti-apoptotic BAX-BCL2 complex.

It localises to the mitochondrion. Functionally, promotes apoptosis by binding to BCL2, hence preventing the formation of protective BCL2-BAX heterodimers. This chain is G0/G1 switch protein 2 (G0s2), found in Mus musculus (Mouse).